A 141-amino-acid polypeptide reads, in one-letter code: Histone H2B (141 aa).

Positions 1–10 are enriched in basic and acidic residues; the sequence is MPPKAAEKKP. The interval 1-49 is disordered; the sequence is MPPKAAEKKPSTGGKAPAGGKAPAEKKEAGKKTAAAASGDKKKRGKTRK. N6-acetyllysine; alternate occurs at positions 8 and 9. Residues K8 and K9 each participate in a glycyl lysine isopeptide (Lys-Gly) (interchain with G-Cter in SUMO); alternate cross-link. Residues 11-22 are compositionally biased toward low complexity; the sequence is STGGKAPAGGKA. K15 carries the post-translational modification N6-acetyllysine. At K26 the chain carries N6-acetyllysine; alternate. K26 is covalently cross-linked (Glycyl lysine isopeptide (Lys-Gly) (interchain with G-Cter in SUMO); alternate). Residue K27 forms a Glycyl lysine isopeptide (Lys-Gly) (interchain with G-Cter in SUMO) linkage. K135 participates in a covalent cross-link: Glycyl lysine isopeptide (Lys-Gly) (interchain with G-Cter in ubiquitin).

The protein belongs to the histone H2B family. The nucleosome is a histone octamer containing two molecules each of H2A, H2B, H3 and H4 assembled in one H3-H4 heterotetramer and two H2A-H2B heterodimers. The octamer wraps approximately 147 bp of DNA. Post-translationally, monoubiquitinated by the ubc2-bre1 complex to form H2BK123ub1. H2BK123ub1 gives a specific tag for epigenetic transcriptional activation and is also prerequisite for H3K4me and H3K79me formation. H2BK123ub1 also modulates the formation of double-strand breaks during meiosis and is a prerequisite for DNA-damage checkpoint activation. In terms of processing, acetylated by gcn5 to form H2BK11ac and H2BK16ac. H2BK16ac can also be formed by esa1. Acetylation of N-terminal lysines and particularly formation of H2BK11acK16ac has a positive effect on transcription. Sumoylation to form H2BK6su or H2BK7su, and probably also H2BK16su or H2BK17su, occurs preferentially near the telomeres and represses gene transcription.

It localises to the nucleus. The protein resides in the chromosome. Core component of nucleosome. Nucleosomes wrap and compact DNA into chromatin, limiting DNA accessibility to the cellular machineries which require DNA as a template. Histones thereby play a central role in transcription regulation, DNA repair, DNA replication and chromosomal stability. DNA accessibility is regulated via a complex set of post-translational modifications of histones, also called histone code, and nucleosome remodeling. The chain is Histone H2B (htb1) from Aspergillus niger (strain ATCC MYA-4892 / CBS 513.88 / FGSC A1513).